Reading from the N-terminus, the 383-residue chain is Neuropeptide Y receptor type 1 (383 aa).

Over 1 to 44 the chain is Extracellular; that stretch reads MNSTSFSQVENHSIYYNFSEKNSRFLAFENDDCHLPLAMIFTLA. N-linked (GlcNAc...) asparagine glycosylation is found at Asn-2, Asn-11, and Asn-17. A helical transmembrane segment spans residues 45–65; that stretch reads LAYGAVIILGVSGNLALIIII. Over 66–76 the chain is Cytoplasmic; sequence LKQKEMRNVTN. A helical transmembrane segment spans residues 77 to 97; the sequence is ILIVNLSFSDLLVAIMCLPFT. The Extracellular segment spans residues 98-116; it reads FVYTLMDHWVFGEAMCKLN. A disulfide bridge links Cys-113 with Cys-198. The helical transmembrane segment at 117 to 137 threads the bilayer; the sequence is PFVQCVSITVSIFSLVLIAVE. Residues 138-154 are Cytoplasmic-facing; it reads RHQLIINPRGWRPNNRH. The helical transmembrane segment at 155–175 threads the bilayer; sequence AYVGIAVIWVLAVASSLPFLI. Over 176–211 the chain is Extracellular; that stretch reads YQVLTDEPFQNVTLDAFKDKYVCFDKFPSDSHRLSY. The N-linked (GlcNAc...) asparagine glycan is linked to Asn-186. A helical transmembrane segment spans residues 212-232; that stretch reads TTLLLVLQYFGPLCFIFICYF. Residues 233–260 lie on the Cytoplasmic side of the membrane; it reads KIYVRLKRRNSMMDKMRDNKYRSSEAKR. The helical transmembrane segment at 261–281 threads the bilayer; sequence INIMLLSIVVAFAVCWLPLTI. Residues 282–299 are Extracellular-facing; the sequence is FNTVFDWDHQIIATCNHN. A helical transmembrane segment spans residues 300–320; it reads LLFLLCHLTAMISTCVNPIFY. Residues 321-383 are Cytoplasmic-facing; it reads GFLNKNFQRD…KIHTDDNEKI (63 aa). A lipid anchor (S-palmitoyl cysteine) is attached at Cys-338. Position 368 is a phosphoserine (Ser-368).

This sequence belongs to the G-protein coupled receptor 1 family.

It is found in the cell membrane. Functionally, receptor for neuropeptide Y and peptide YY. In Bos taurus (Bovine), this protein is Neuropeptide Y receptor type 1 (NPY1R).